We begin with the raw amino-acid sequence, 621 residues long: 1-deoxy-D-xylulose-5-phosphate synthase (621 aa).

Thiamine diphosphate-binding positions include His-80 and 121–123 (GHS). Asp-152 is a binding site for Mg(2+). Thiamine diphosphate contacts are provided by residues 153–154 (GA), Asn-181, Tyr-288, and Glu-371. Asn-181 contacts Mg(2+).

This sequence belongs to the transketolase family. DXPS subfamily. As to quaternary structure, homodimer. Requires Mg(2+) as cofactor. Thiamine diphosphate serves as cofactor.

It catalyses the reaction D-glyceraldehyde 3-phosphate + pyruvate + H(+) = 1-deoxy-D-xylulose 5-phosphate + CO2. The protein operates within metabolic intermediate biosynthesis; 1-deoxy-D-xylulose 5-phosphate biosynthesis; 1-deoxy-D-xylulose 5-phosphate from D-glyceraldehyde 3-phosphate and pyruvate: step 1/1. Catalyzes the acyloin condensation reaction between C atoms 2 and 3 of pyruvate and glyceraldehyde 3-phosphate to yield 1-deoxy-D-xylulose-5-phosphate (DXP). This Pectobacterium atrosepticum (strain SCRI 1043 / ATCC BAA-672) (Erwinia carotovora subsp. atroseptica) protein is 1-deoxy-D-xylulose-5-phosphate synthase.